The primary structure comprises 290 residues: UPF0761 membrane protein Ent638_4092 (290 aa).

Helical transmembrane passes span 44–64, 104–124, 140–160, 183–203, 210–230, and 244–264; these read LLSL…FPMF, VGAC…DSAL, FAVY…SLAI, IFPL…VPTL, AIVG…GFAL, and VLAV…IVLL.

Belongs to the UPF0761 family.

It is found in the cell inner membrane. This chain is UPF0761 membrane protein Ent638_4092, found in Enterobacter sp. (strain 638).